A 510-amino-acid chain; its full sequence is Lysine--tRNA ligase (510 aa).

Residues Glu420 and Glu427 each coordinate Mg(2+).

The protein belongs to the class-II aminoacyl-tRNA synthetase family. Homodimer. Mg(2+) serves as cofactor.

It is found in the cytoplasm. It catalyses the reaction tRNA(Lys) + L-lysine + ATP = L-lysyl-tRNA(Lys) + AMP + diphosphate. This Ralstonia nicotianae (strain ATCC BAA-1114 / GMI1000) (Ralstonia solanacearum) protein is Lysine--tRNA ligase.